The chain runs to 352 residues: MITKNEALDFLKLNSINSILEKLEGINTQNSSKTITFSKNAFIPVCNWCRNVCGYCTFRNENFKLLKMDEMKEILTKANAFGCREALFTFGENVDENEKVKEELKKMGYYGILEYLYEISAWCLENTNLLPHTNCGILSYDELEYLREVNASMGLMLENSSARLCSTIAHEKSPGKDPNLRIEMIENAGKLKIPFTTGILIGIGETLEERIDSIFEIKRIHEKYGHIQEVIVQNFRSKPLIPMENYKEPSPIEMFKMIILSKLILEGISIQVPPNLNRETGQLFLMAGIDDWGGVSPLTKDFVNPEAPWPDIEELNSFSKELGFELKERLPVYEKYISKEWLDKKVLEKIKK.

Residues 35–275 form the Radical SAM core domain; sequence ITFSKNAFIP…EGISIQVPPN (241 aa). [4Fe-4S] cluster contacts are provided by cysteine 49, cysteine 53, and cysteine 56.

Belongs to the radical SAM superfamily. CofG family. As to quaternary structure, consists of two subunits, CofG and CofH. The cofactor is [4Fe-4S] cluster.

It carries out the reaction 5-amino-5-(4-hydroxybenzyl)-6-(D-ribitylimino)-5,6-dihydrouracil + S-adenosyl-L-methionine = 7,8-didemethyl-8-hydroxy-5-deazariboflavin + 5'-deoxyadenosine + L-methionine + NH4(+) + H(+). The protein operates within cofactor biosynthesis; coenzyme F0 biosynthesis. Its function is as follows. Catalyzes the radical-mediated synthesis of 7,8-didemethyl-8-hydroxy-5-deazariboflavin from 5-amino-5-(4-hydroxybenzyl)-6-(D-ribitylimino)-5,6-dihydrouracil. The sequence is that of 7,8-didemethyl-8-hydroxy-5-deazariboflavin synthase from Methanococcus maripaludis (strain C5 / ATCC BAA-1333).